A 1189-amino-acid chain; its full sequence is Lysine-specific demethylase hairless (1189 aa).

5 disordered regions span residues 1 to 40 (MESTPSFLKGTPTWEKTAPENGIVRQEPGSPPRDGLHHGP), 236 to 257 (HLQRAGEAERPSLHQRDGEMGA), 349 to 377 (EGGASGASEPSEEVNKASGPRACPPSHHT), 414 to 480 (AGSP…LQDP), and 505 to 552 (GEGG…RLST). Residues 239 to 254 (RAGEAERPSLHQRDGE) are compositionally biased toward basic and acidic residues. Residues 457-469 (KDVDSGQHDEQKG) show a composition bias toward basic and acidic residues. Positions 566 to 570 (LCRLL) match the LXXLL motif 1 motif. The segment at 600–625 (CSRCHHGLFNTHWRCPRCSHRLCVAC) adopts a C6-type zinc-finger fold. The tract at residues 702–750 (GDAGQQKESTQKTPPTPQPSCNGDTHRTKSIKEETPDSAETPAEDRAGR) is disordered. The segment covering 725-736 (DTHRTKSIKEET) has biased composition (basic and acidic residues). The short motif at 758–762 (LCELL) is the LXXLL motif 2 element. The JmjC domain maps to 946-1157 (DTSRVENLAA…LSAQLCHQGP (212 aa)). 3 residues coordinate Fe cation: cysteine 1007, glutamate 1009, and histidine 1125.

The cofactor is Fe(2+). As to expression, strongest expression of isoforms 1 and 2 is seen in the small intestine, weaker expression in brain and colon, and trace expression is found in liver, pancreas, spleen, thymus, stomach, salivary gland, appendix and trachea. Isoform 1 is always the most abundant. Isoform 1 is exclusively expressed at low levels in kidney and testis. Isoform 2 is exclusively expressed at high levels in the skin.

The protein localises to the nucleus. The catalysed reaction is N(6),N(6)-dimethyl-L-lysyl(9)-[histone H3] + 2 2-oxoglutarate + 2 O2 = L-lysyl(9)-[histone H3] + 2 formaldehyde + 2 succinate + 2 CO2. Its function is as follows. Histone demethylase that specifically demethylates both mono- and dimethylated 'Lys-9' of histone H3. May act as a transcription regulator controlling hair biology (via targeting of collagens), neural activity, and cell cycle. This is Lysine-specific demethylase hairless (HR) from Homo sapiens (Human).